The following is a 251-amino-acid chain: CDP-diacylglycerol pyrophosphatase (251 aa).

The helical transmembrane segment at 4-24 (AGLLFLVMIVIAVVAAGIGYW) threads the bilayer.

The protein belongs to the Cdh family.

Its subcellular location is the cell inner membrane. It carries out the reaction a CDP-1,2-diacyl-sn-glycerol + H2O = a 1,2-diacyl-sn-glycero-3-phosphate + CMP + 2 H(+). It functions in the pathway phospholipid metabolism; CDP-diacylglycerol degradation; phosphatidate from CDP-diacylglycerol: step 1/1. This chain is CDP-diacylglycerol pyrophosphatase, found in Escherichia coli (strain ATCC 8739 / DSM 1576 / NBRC 3972 / NCIMB 8545 / WDCM 00012 / Crooks).